The chain runs to 89 residues: Large ribosomal subunit protein bL27 (89 aa).

The interval 1-21 (MAHKKAGGSSRNGRDSESKRL) is disordered.

The protein belongs to the bacterial ribosomal protein bL27 family.

In Brucella anthropi (strain ATCC 49188 / DSM 6882 / CCUG 24695 / JCM 21032 / LMG 3331 / NBRC 15819 / NCTC 12168 / Alc 37) (Ochrobactrum anthropi), this protein is Large ribosomal subunit protein bL27.